The primary structure comprises 437 residues: Dolichyl-diphosphooligosaccharide--protein glycosyltransferase 48 kDa subunit (437 aa).

Positions 1 to 24 are cleaved as a signal peptide; that stretch reads MASLRVSVLLVAASCLLLGSGLRA. The Lumenal segment spans residues 25-407; it reads GPRTLVLLEN…QYERFIPSAY (383 aa). A helical membrane pass occupies residues 408–428; it reads PYYASAFSVMFGLFIFSIVFL. Residues 429-437 are Cytoplasmic-facing; it reads HMKEKEKSD.

It belongs to the DDOST 48 kDa subunit family. Component of the oligosaccharyltransferase (OST) complex.

The protein resides in the endoplasmic reticulum membrane. The protein operates within protein modification; protein glycosylation. In terms of biological role, subunit of the oligosaccharyl transferase (OST) complex that catalyzes the initial transfer of a defined glycan (Glc(3)Man(9)GlcNAc(2) in eukaryotes) from the lipid carrier dolichol-pyrophosphate to an asparagine residue within an Asn-X-Ser/Thr consensus motif in nascent polypeptide chains, the first step in protein N-glycosylation. N-glycosylation occurs cotranslationally and the complex associates with the Sec61 complex at the channel-forming translocon complex that mediates protein translocation across the endoplasmic reticulum (ER). All subunits are required for a maximal enzyme activity. Required for the assembly of both SST3A- and SS3B-containing OST complexes. The polypeptide is Dolichyl-diphosphooligosaccharide--protein glycosyltransferase 48 kDa subunit (Xenopus tropicalis (Western clawed frog)).